A 401-amino-acid polypeptide reads, in one-letter code: MKAFILAAGSGERLEPITHTRPKAFVPILSKPLIEYQIEYLRKCGIRDITVIVSSKNKEYFEKKLKEISIVTQKDDIKGTGAAILSAKFNDEALIIYGDLFFSNEKEICNIITLKENAIIGVKVSNPKDYGVLVLDNQNNLSKIIEKPEIPPSNLINAGIYKLNSDIFTYLDKISISERGELELTDAINLMAKDHRVKVIEYEGYWMDIGKPWNIIDVNKWALDNLVFSQNLGNVEDNVKIKGKVIIEEDAEIKSGTYIEGPVYIGKGSEIGPNSYLRPYTILVEKNKIGASVEVKESVIMEGSKIPHLSYVGDSVIAEDVNFGAGTLIANLRFDEKEVKVNVKGKRISSGRRKLGAFIGGHVRTGINVTILPGVKIGAYARIYPGAVVNRDVGYGEFFKV.

A nucleotidylyltransferase region spans residues 1–220; that stretch reads MKAFILAAGS…KPWNIIDVNK (220 aa). Residues 8–13, Gln73, and Gly79 contribute to the a ribonucleoside 5'-triphosphate site; that span reads AGSGER. Thr80, Tyr97, Gly131, Glu146, and Asn157 together coordinate N-acetyl-alpha-D-glucosamine 1-phosphate. The acetyltransferase stretch occupies residues 236-401; it reads EDNVKIKGKV…DVGYGEFFKV (166 aa).

The protein in the N-terminal section; belongs to the N-acetylglucosamine-1-phosphate uridyltransferase family. It in the C-terminal section; belongs to the transferase hexapeptide repeat family. As to quaternary structure, homotrimer. The cofactor is Co(2+). It depends on Mn(2+) as a cofactor.

It carries out the reaction dTTP + alpha-D-glucose 1-phosphate + H(+) = dTDP-alpha-D-glucose + diphosphate. The catalysed reaction is alpha-D-glucose 1-phosphate + UTP + H(+) = UDP-alpha-D-glucose + diphosphate. It catalyses the reaction N-acetyl-alpha-D-galactosamine 1-phosphate + UTP + H(+) = UDP-N-acetyl-alpha-D-galactosamine + diphosphate. The enzyme catalyses N-acetyl-alpha-D-glucosamine 1-phosphate + UTP + H(+) = UDP-N-acetyl-alpha-D-glucosamine + diphosphate. It carries out the reaction alpha-D-galactosamine 1-phosphate + acetyl-CoA = N-acetyl-alpha-D-galactosamine 1-phosphate + CoA + H(+). The catalysed reaction is alpha-D-glucosamine 1-phosphate + acetyl-CoA = N-acetyl-alpha-D-glucosamine 1-phosphate + CoA + H(+). Its pathway is nucleotide-sugar biosynthesis; UDP-N-acetyl-alpha-D-glucosamine biosynthesis; N-acetyl-alpha-D-glucosamine 1-phosphate from alpha-D-glucosamine 6-phosphate (route II): step 2/2. It functions in the pathway nucleotide-sugar biosynthesis; UDP-N-acetyl-alpha-D-glucosamine biosynthesis; UDP-N-acetyl-alpha-D-glucosamine from N-acetyl-alpha-D-glucosamine 1-phosphate: step 1/1. Its activity is regulated as follows. GlcN-1-P acetyltransferase activity is inhibited by divalent cations. GalN-1-P acetyltransferase activity is enhanced by Co(2+), Mg(2+) and Ca(2+), but inhibited by Zn(2+) or Mn(2+). Bifunctional enzyme involved in the synthesis of UDP-N-acetylglucosamine (UDP-GlcNAc) and UDP-N-acetylgalactosamine (UDP-GalNAc). It has multiple amino-sugar-1-phosphate acetyltransferase activities, including glucosamine-1-phosphate (GlcN-1-P) acetyltransferase and galactosamine-1-phosphate (GalN-1-P) acetyltransferase activities, and multiple sugar-1-phosphate nucleotidylyltransferase activities, including N-acetylglucosamine-1-phosphate (GlcNAc-1-P) uridyltransferase and N-acetylgalactosamine-1-phosphate (GalNAc-1-P) uridyltransferase activities. Also catalyzes the formation of dTDP-glucose from dTTP and glucose-1-phosphate (Glc-1-P), and the reverse reaction, which produces dTTP from dTDP-glucose and diphosphate. Can also catalyze the formation of UDP-glucose from UTP and glucose-1-phosphate. In Sulfurisphaera tokodaii (strain DSM 16993 / JCM 10545 / NBRC 100140 / 7) (Sulfolobus tokodaii), this protein is Bifunctional sugar-1-phosphate nucleotidylyltransferase/acetyltransferase.